Here is a 131-residue protein sequence, read N- to C-terminus: Large ribosomal subunit protein bL19 (131 aa).

Belongs to the bacterial ribosomal protein bL19 family.

Its function is as follows. This protein is located at the 30S-50S ribosomal subunit interface and may play a role in the structure and function of the aminoacyl-tRNA binding site. The polypeptide is Large ribosomal subunit protein bL19 (Synechococcus sp. (strain CC9902)).